The sequence spans 380 residues: Cytochrome b (380 aa).

The next 4 membrane-spanning stretches (helical) occupy residues 33-53 (FGSL…FLAM), 77-98 (WLLR…YLHI), 113-133 (WNIG…GYVL), and 178-198 (FFTF…LHLL). Positions 83 and 97 each coordinate heme b. 2 residues coordinate heme b: His-182 and His-196. His-201 is a binding site for a ubiquinone. The next 4 membrane-spanning stretches (helical) occupy residues 226-246 (YKDL…ALLN), 288-308 (LGGV…PTLH), 320-340 (SSQT…WIGG), and 347-367 (FIII…FFIP).

Belongs to the cytochrome b family. The cytochrome bc1 complex contains 3 respiratory subunits (MT-CYB, CYC1 and UQCRFS1), 2 core proteins (UQCRC1 and UQCRC2) and probably 6 low-molecular weight proteins. Requires heme b as cofactor.

It localises to the mitochondrion inner membrane. Functionally, component of the ubiquinol-cytochrome c reductase complex (complex III or cytochrome b-c1 complex) that is part of the mitochondrial respiratory chain. The b-c1 complex mediates electron transfer from ubiquinol to cytochrome c. Contributes to the generation of a proton gradient across the mitochondrial membrane that is then used for ATP synthesis. This chain is Cytochrome b (mt-cyb), found in Lepisosteus oculatus (Spotted gar).